The primary structure comprises 1377 residues: DNA-directed RNA polymerase subunit beta (1377 aa).

Belongs to the RNA polymerase beta chain family. In terms of assembly, the RNAP catalytic core consists of 2 alpha, 1 beta, 1 beta' and 1 omega subunit. When a sigma factor is associated with the core the holoenzyme is formed, which can initiate transcription.

The enzyme catalyses RNA(n) + a ribonucleoside 5'-triphosphate = RNA(n+1) + diphosphate. Functionally, DNA-dependent RNA polymerase catalyzes the transcription of DNA into RNA using the four ribonucleoside triphosphates as substrates. The polypeptide is DNA-directed RNA polymerase subunit beta (Brucella suis biovar 1 (strain 1330)).